The following is a 187-amino-acid chain: Elongation factor P (187 aa).

It belongs to the elongation factor P family.

The protein resides in the cytoplasm. It participates in protein biosynthesis; polypeptide chain elongation. In terms of biological role, involved in peptide bond synthesis. Stimulates efficient translation and peptide-bond synthesis on native or reconstituted 70S ribosomes in vitro. Probably functions indirectly by altering the affinity of the ribosome for aminoacyl-tRNA, thus increasing their reactivity as acceptors for peptidyl transferase. The chain is Elongation factor P from Clavibacter michiganensis subsp. michiganensis (strain NCPPB 382).